The chain runs to 326 residues: Vomeronasal type-1 receptor 100 (326 aa).

The Extracellular portion of the chain corresponds to 1-32 (MSEFPFFSPQPLFSYMMNKNSRVHTDSNIRNT). Residues 33–53 (FFTEIGIGILANSFLLLFHIF) traverse the membrane as a helical segment. Residues 54–70 (KFIRGQRSRLTDLPIGL) lie on the Cytoplasmic side of the membrane. The chain crosses the membrane as a helical span at residues 71–91 (LSLIHLLMLLMGAFIAIDIFI). At 92–104 (SWRGWDDIICKFL) the chain is on the extracellular side. Cysteines 101 and 188 form a disulfide. The chain crosses the membrane as a helical span at residues 105 to 127 (VYLYRSFRGLSLCTTCMLSVLQA). At 128 to 149 (ITLSPRSSCLAKFKHKSPHHVS) the chain is on the cytoplasmic side. A helical membrane pass occupies residues 150–170 (CAIISLSILYMFISSHLLVSI). Residues 171–209 (NATPNLTTNNFMQVTQSCYIIPLSYLMQSMFSTLLAIRD) lie on the Extracellular side of the membrane. Asn-175 carries N-linked (GlcNAc...) asparagine glycosylation. A helical transmembrane segment spans residues 210-230 (ISLISLMVLSTCYMVVLLCRH). Residues 231–254 (RNQIQHLQGTNLSPKASPEQRATQ) are Cytoplasmic-facing. The helical transmembrane segment at 255 to 275 (TILMLMTFFVLMSIFDSIVSC) threads the bilayer. Over 276-285 (SRTMYLNDPT) the chain is Extracellular. A helical membrane pass occupies residues 286–306 (SYYIQIFVVYIYATVSPFVFM). Residues 307–326 (STEKHIVNFLKSMCVRVKNV) are Cytoplasmic-facing.

This sequence belongs to the G-protein coupled receptor 1 family. As to expression, expressed in 1-4% of neurons of the vomeronasal organ. Only one pheromone receptor gene may be expressed in a particular neuron. Not expressed in the main olfactory epithelium.

The protein localises to the cell membrane. Its function is as follows. Putative pheromone receptor implicated in the regulation of social as well as reproductive behavior. The chain is Vomeronasal type-1 receptor 100 (Vom1r100) from Rattus norvegicus (Rat).